The following is a 519-amino-acid chain: 2-isopropylmalate synthase (519 aa).

The region spanning 5–267 (VIIFDTTLRD…TTNVNPMEIS (263 aa)) is the Pyruvate carboxyltransferase domain. 4 residues coordinate Mn(2+): Asp-14, His-202, His-204, and Asn-238. The regulatory domain stretch occupies residues 392 to 519 (RLESINVQSG…KEQLIHIDQV (128 aa)).

This sequence belongs to the alpha-IPM synthase/homocitrate synthase family. LeuA type 1 subfamily. As to quaternary structure, homodimer. It depends on Mn(2+) as a cofactor.

The protein resides in the cytoplasm. The catalysed reaction is 3-methyl-2-oxobutanoate + acetyl-CoA + H2O = (2S)-2-isopropylmalate + CoA + H(+). Its pathway is amino-acid biosynthesis; L-leucine biosynthesis; L-leucine from 3-methyl-2-oxobutanoate: step 1/4. Functionally, catalyzes the condensation of the acetyl group of acetyl-CoA with 3-methyl-2-oxobutanoate (2-ketoisovalerate) to form 3-carboxy-3-hydroxy-4-methylpentanoate (2-isopropylmalate). This chain is 2-isopropylmalate synthase, found in Psychromonas ingrahamii (strain DSM 17664 / CCUG 51855 / 37).